A 338-amino-acid polypeptide reads, in one-letter code: Bifunctional methylenetetrahydrofolate dehydrogenase/cyclohydrolase 2, mitochondrial (338 aa).

Substrate-binding positions include 89–93 (YVRNK) and 136–138 (VQL). NAD(+) contacts are provided by residues 205 to 207 (GRS) and arginine 238. Residue 314-318 (PGGVG) participates in substrate binding.

This sequence belongs to the tetrahydrofolate dehydrogenase/cyclohydrolase family. It depends on Mg(2+) as a cofactor. In terms of tissue distribution, widely expressed.

The protein resides in the mitochondrion inner membrane. It carries out the reaction (6R)-5,10-methylene-5,6,7,8-tetrahydrofolate + NAD(+) = (6R)-5,10-methenyltetrahydrofolate + NADH. It catalyses the reaction (6R)-5,10-methenyltetrahydrofolate + H2O = (6R)-10-formyltetrahydrofolate + H(+). The enzyme catalyses (6R)-5,10-methylene-5,6,7,8-tetrahydrofolate + NADP(+) = (6R)-5,10-methenyltetrahydrofolate + NADPH. It functions in the pathway one-carbon metabolism; tetrahydrofolate interconversion. Functionally, bifunctional mitochondrial folate-interconverting enzyme that has both NAD/NADP-dependent methylenetetrahydrofolate dehydrogenase and methenyltetrahydrofolate cyclohydrolase activities. This chain is Bifunctional methylenetetrahydrofolate dehydrogenase/cyclohydrolase 2, mitochondrial, found in Mus musculus (Mouse).